The primary structure comprises 416 residues: D-amino acid dehydrogenase (416 aa).

An FAD-binding site is contributed by isoleucine 3–tyrosine 17.

It belongs to the DadA oxidoreductase family. Requires FAD as cofactor.

It carries out the reaction a D-alpha-amino acid + A + H2O = a 2-oxocarboxylate + AH2 + NH4(+). The protein operates within amino-acid degradation; D-alanine degradation; NH(3) and pyruvate from D-alanine: step 1/1. In terms of biological role, oxidative deamination of D-amino acids. In Brucella abortus (strain S19), this protein is D-amino acid dehydrogenase.